The following is a 271-amino-acid chain: 3-methyl-2-oxobutanoate hydroxymethyltransferase (271 aa).

The Mg(2+) site is built by aspartate 49 and aspartate 88. Residues 49–50 (DS), aspartate 88, and lysine 118 each bind 3-methyl-2-oxobutanoate. Glutamate 120 is a binding site for Mg(2+). The active-site Proton acceptor is glutamate 187.

It belongs to the PanB family. In terms of assembly, homodecamer; pentamer of dimers. Mg(2+) is required as a cofactor.

The protein localises to the cytoplasm. The enzyme catalyses 3-methyl-2-oxobutanoate + (6R)-5,10-methylene-5,6,7,8-tetrahydrofolate + H2O = 2-dehydropantoate + (6S)-5,6,7,8-tetrahydrofolate. Its pathway is cofactor biosynthesis; (R)-pantothenate biosynthesis; (R)-pantoate from 3-methyl-2-oxobutanoate: step 1/2. In terms of biological role, catalyzes the reversible reaction in which hydroxymethyl group from 5,10-methylenetetrahydrofolate is transferred onto alpha-ketoisovalerate to form ketopantoate. The polypeptide is 3-methyl-2-oxobutanoate hydroxymethyltransferase (Bartonella bacilliformis (strain ATCC 35685 / KC583 / Herrer 020/F12,63)).